A 513-amino-acid chain; its full sequence is Mannosyl-oligosaccharide alpha-1,2-mannosidase 1B (513 aa).

A signal peptide spans 1 to 21 (MHLPSLSLSLTALAIASPSAA). Residues N97, N117, N150, N184, N251, N322, N348, and N368 are each glycosylated (N-linked (GlcNAc...) asparagine). A disulfide bridge connects residues C334 and C363. The Proton donor role is filled by E377. A Ca(2+)-binding site is contributed by T503.

This sequence belongs to the glycosyl hydrolase 47 family. As to quaternary structure, monomer. It depends on Ca(2+) as a cofactor. Mg(2+) is required as a cofactor.

It localises to the cytoplasmic vesicle lumen. It catalyses the reaction N(4)-(alpha-D-Man-(1-&gt;2)-alpha-D-Man-(1-&gt;2)-alpha-D-Man-(1-&gt;3)-[alpha-D-Man-(1-&gt;2)-alpha-D-Man-(1-&gt;3)-[alpha-D-Man-(1-&gt;2)-alpha-D-Man-(1-&gt;6)]-alpha-D-Man-(1-&gt;6)]-beta-D-Man-(1-&gt;4)-beta-D-GlcNAc-(1-&gt;4)-beta-D-GlcNAc)-L-asparaginyl-[protein] (N-glucan mannose isomer 9A1,2,3B1,2,3) + 4 H2O = N(4)-(alpha-D-Man-(1-&gt;3)-[alpha-D-Man-(1-&gt;3)-[alpha-D-Man-(1-&gt;6)]-alpha-D-Man-(1-&gt;6)]-beta-D-Man-(1-&gt;4)-beta-D-GlcNAc-(1-&gt;4)-beta-D-GlcNAc)-L-asparaginyl-[protein] (N-glucan mannose isomer 5A1,2) + 4 beta-D-mannose. The enzyme catalyses N(4)-(alpha-D-Man-(1-&gt;2)-alpha-D-Man-(1-&gt;2)-alpha-D-Man-(1-&gt;3)-[alpha-D-Man-(1-&gt;3)-[alpha-D-Man-(1-&gt;2)-alpha-D-Man-(1-&gt;6)]-alpha-D-Man-(1-&gt;6)]-beta-D-Man-(1-&gt;4)-beta-D-GlcNAc-(1-&gt;4)-beta-D-GlcNAc)-L-asparaginyl-[protein] (N-glucan mannose isomer 8A1,2,3B1,3) + 3 H2O = N(4)-(alpha-D-Man-(1-&gt;3)-[alpha-D-Man-(1-&gt;3)-[alpha-D-Man-(1-&gt;6)]-alpha-D-Man-(1-&gt;6)]-beta-D-Man-(1-&gt;4)-beta-D-GlcNAc-(1-&gt;4)-beta-D-GlcNAc)-L-asparaginyl-[protein] (N-glucan mannose isomer 5A1,2) + 3 beta-D-mannose. It functions in the pathway protein modification; protein glycosylation. Its function is as follows. Involved in the maturation of Asn-linked oligosaccharides. Progressively trims alpha-1,2-linked mannose residues from Man(9)GlcNAc(2) to produce Man(5)GlcNAc(2). This chain is Mannosyl-oligosaccharide alpha-1,2-mannosidase 1B (mns1B), found in Aspergillus phoenicis (Aspergillus saitoi).